The primary structure comprises 178 residues: Bifunctional protein PyrR (178 aa).

Substrate is bound by residues 41–42 (RR), 103–111 (DDVLYTGRT), and arginine 136. A PRPP-binding motif is present at residues 99–111 (VILVDDVLYTGRT).

This sequence belongs to the purine/pyrimidine phosphoribosyltransferase family. PyrR subfamily. As to quaternary structure, homodimer and homohexamer; in equilibrium.

It carries out the reaction UMP + diphosphate = 5-phospho-alpha-D-ribose 1-diphosphate + uracil. Its function is as follows. Regulates transcriptional attenuation of the pyrimidine nucleotide (pyr) operon by binding in a uridine-dependent manner to specific sites on pyr mRNA. This disrupts an antiterminator hairpin in the RNA and favors formation of a downstream transcription terminator, leading to a reduced expression of downstream genes. Functionally, also displays a weak uracil phosphoribosyltransferase activity which is not physiologically significant. In Clostridium acetobutylicum (strain ATCC 824 / DSM 792 / JCM 1419 / IAM 19013 / LMG 5710 / NBRC 13948 / NRRL B-527 / VKM B-1787 / 2291 / W), this protein is Bifunctional protein PyrR.